The following is a 1312-amino-acid chain: DNA repair protein RAD50 (1312 aa).

Positions 13, 36, 37, 39, 40, 41, 42, 65, 67, and 158 each coordinate ATP. Residue threonine 41 participates in Mg(2+) binding. Glutamine 158 contributes to the Mg(2+) binding site. Coiled-coil stretches lie at residues 185 to 347 (TKAL…LIRR) and 403 to 558 (QDLT…LQND). Phosphoserine is present on serine 469. Threonine 568 is modified (phosphothreonine). Positions 640 to 678 (DCTIDEYNDVLEETELSYKTALENLKMHQTTLEFNRKAL) form a coiled coil. A Zinc-hook domain is found at 640–741 (DCTIDEYNDV…SLRLLEKHII (102 aa)). Positions 687 and 690 each coordinate Zn(2+). Coiled coils occupy residues 712-741 (DANFEKTLKDTVQNEKEYLHSLRLLEKHII) and 787-1108 (LAES…DIEK).

Belongs to the SMC family. RAD50 subfamily. Component of the MRN complex composed of two heterodimers RAD50 and MRE11 associated with a single XRS2. The MRN complexes dimerize on DNA to form joined MRN-MRN oligomers required for DNA double-strand break repair. Zn(2+) serves as cofactor.

The protein resides in the nucleus. Its subcellular location is the chromosome. The catalysed reaction is ATP + H2O = ADP + phosphate + H(+). Component of the MRN complex, which plays a central role in double-strand break (DSB) repair, DNA recombination, maintenance of telomere integrity and meiosis. The MRN complex is involved in the repair of DNA double-strand breaks (DSBs) via homologous recombination (HR), an error-free mechanism which primarily occurs during S and G2 phases. The complex (1) mediates the end resection of damaged DNA, which generates proper single-stranded DNA, a key initial steps in HR, and is (2) required for the recruitment of other repair factors and efficient activation of TEL1/ATM and ATR upon DNA damage. The MRN complex possesses single-strand endonuclease activity and double-strand-specific 3'-5' exonuclease activity, which are provided by MRE11, to initiate end resection, which is required for single-strand invasion and recombination. Within the complex, RAD50 is both required to bind DNA ends and hold them in close proximity and regulate the activity of MRE11. RAD50 provides an ATP-dependent control of MRE11 by positioning DNA ends into the MRE11 active site: ATP-binding induces a large structural change from an open form with accessible MRE11 nuclease sites into a closed form. The MRN complex is also required for the processing of R-loops. The protein is DNA repair protein RAD50 of Saccharomyces cerevisiae (strain ATCC 204508 / S288c) (Baker's yeast).